A 191-amino-acid chain; its full sequence is Elongation factor P 1 (191 aa).

This sequence belongs to the elongation factor P family.

The protein localises to the cytoplasm. Its pathway is protein biosynthesis; polypeptide chain elongation. Involved in peptide bond synthesis. Stimulates efficient translation and peptide-bond synthesis on native or reconstituted 70S ribosomes in vitro. Probably functions indirectly by altering the affinity of the ribosome for aminoacyl-tRNA, thus increasing their reactivity as acceptors for peptidyl transferase. The protein is Elongation factor P 1 of Lactobacillus acidophilus (strain ATCC 700396 / NCK56 / N2 / NCFM).